Reading from the N-terminus, the 385-residue chain is Probable thioesterase PNKD (385 aa).

Positions 31-42 are enriched in polar residues; the sequence is NKASQNRSRALQ. Positions 31–57 are disordered; the sequence is NKASQNRSRALQSHSSPECKEEPEPLS. Zn(2+) contacts are provided by histidine 172, histidine 174, aspartate 176, histidine 177, histidine 229, aspartate 253, and histidine 291.

This sequence belongs to the metallo-beta-lactamase superfamily. Glyoxalase II family. It depends on Zn(2+) as a cofactor. Undergoes cleavage at the N-terminus.

The protein resides in the cell membrane. It is found in the mitochondrion. The enzyme catalyses a thioester + H2O = a thiol + a carboxylate + H(+). In terms of biological role, probable thioesterase that may play a role in cellular detoxification processes; it likely acts on a yet-unknown alpha-hydroxythioester substrate. In vitro, it is able to catalyze the hydrolysis of S-D-lactoyl-glutathione to form glutathione and D-lactic acid at very low rate, though this reaction is not physiologically relevant in vivo. This Bos taurus (Bovine) protein is Probable thioesterase PNKD (PNKD).